The primary structure comprises 431 residues: Enolase (431 aa).

Glutamine 166 serves as a coordination point for (2R)-2-phosphoglycerate. Glutamate 208 functions as the Proton donor in the catalytic mechanism. Mg(2+) is bound by residues aspartate 245, glutamate 289, and aspartate 316. Residues lysine 341, arginine 370, serine 371, and lysine 392 each contribute to the (2R)-2-phosphoglycerate site. The active-site Proton acceptor is lysine 341.

The protein belongs to the enolase family. Mg(2+) is required as a cofactor.

It localises to the cytoplasm. It is found in the secreted. The protein resides in the cell surface. The enzyme catalyses (2R)-2-phosphoglycerate = phosphoenolpyruvate + H2O. It functions in the pathway carbohydrate degradation; glycolysis; pyruvate from D-glyceraldehyde 3-phosphate: step 4/5. In terms of biological role, catalyzes the reversible conversion of 2-phosphoglycerate (2-PG) into phosphoenolpyruvate (PEP). It is essential for the degradation of carbohydrates via glycolysis. This chain is Enolase, found in Ruminiclostridium cellulolyticum (strain ATCC 35319 / DSM 5812 / JCM 6584 / H10) (Clostridium cellulolyticum).